The sequence spans 86 residues: Small ribosomal subunit protein uS15 (86 aa).

It belongs to the universal ribosomal protein uS15 family. As to quaternary structure, part of the 30S ribosomal subunit. Forms a bridge to the 50S subunit in the 70S ribosome, contacting the 23S rRNA.

Functionally, one of the primary rRNA binding proteins, it binds directly to 16S rRNA where it helps nucleate assembly of the platform of the 30S subunit by binding and bridging several RNA helices of the 16S rRNA. Forms an intersubunit bridge (bridge B4) with the 23S rRNA of the 50S subunit in the ribosome. The sequence is that of Small ribosomal subunit protein uS15 from Mycoplasma genitalium (strain ATCC 33530 / DSM 19775 / NCTC 10195 / G37) (Mycoplasmoides genitalium).